Consider the following 77-residue polypeptide: MKVKVFRVHGYFEKNGRKFKFTKEYRGIKEEDVKELVYSDIGSKHKVKRNKIFIKEIKEIRPEEAEDIVVRRLSLEL.

Belongs to the eukaryotic ribosomal protein eL20 family. In terms of assembly, part of the 50S ribosomal subunit. Binds 23S rRNA.

The protein is Large ribosomal subunit protein eL20 of Pyrococcus furiosus (strain ATCC 43587 / DSM 3638 / JCM 8422 / Vc1).